The sequence spans 208 residues: 3-isopropylmalate dehydratase small subunit (208 aa).

The protein belongs to the LeuD family. LeuD type 1 subfamily. In terms of assembly, heterodimer of LeuC and LeuD.

It catalyses the reaction (2R,3S)-3-isopropylmalate = (2S)-2-isopropylmalate. The protein operates within amino-acid biosynthesis; L-leucine biosynthesis; L-leucine from 3-methyl-2-oxobutanoate: step 2/4. In terms of biological role, catalyzes the isomerization between 2-isopropylmalate and 3-isopropylmalate, via the formation of 2-isopropylmaleate. This Cupriavidus necator (Alcaligenes eutrophus) protein is 3-isopropylmalate dehydratase small subunit (leuD).